The primary structure comprises 420 residues: Glutamyl-tRNA reductase (420 aa).

Residues 49 to 52 (TCNR), S109, 114 to 116 (EPQ), and Q120 each bind substrate. C50 (nucleophile) is an active-site residue. 189–194 (GAGETI) contacts NADP(+).

The protein belongs to the glutamyl-tRNA reductase family. Homodimer.

The catalysed reaction is (S)-4-amino-5-oxopentanoate + tRNA(Glu) + NADP(+) = L-glutamyl-tRNA(Glu) + NADPH + H(+). It participates in porphyrin-containing compound metabolism; protoporphyrin-IX biosynthesis; 5-aminolevulinate from L-glutamyl-tRNA(Glu): step 1/2. Its function is as follows. Catalyzes the NADPH-dependent reduction of glutamyl-tRNA(Glu) to glutamate 1-semialdehyde (GSA). In Photorhabdus laumondii subsp. laumondii (strain DSM 15139 / CIP 105565 / TT01) (Photorhabdus luminescens subsp. laumondii), this protein is Glutamyl-tRNA reductase.